The sequence spans 557 residues: Formate--tetrahydrofolate ligase (557 aa).

65 to 72 is an ATP binding site; it reads TPAGEGKT.

This sequence belongs to the formate--tetrahydrofolate ligase family.

It carries out the reaction (6S)-5,6,7,8-tetrahydrofolate + formate + ATP = (6R)-10-formyltetrahydrofolate + ADP + phosphate. It functions in the pathway one-carbon metabolism; tetrahydrofolate interconversion. This Methylococcus capsulatus (strain ATCC 33009 / NCIMB 11132 / Bath) protein is Formate--tetrahydrofolate ligase.